We begin with the raw amino-acid sequence, 183 residues long: Apo-citrate lyase phosphoribosyl-dephospho-CoA transferase (183 aa).

It belongs to the CitX family.

It carries out the reaction apo-[citrate lyase ACP] + 2'-(5''-triphospho-alpha-D-ribosyl)-3'-dephospho-CoA = holo-[citrate lyase ACP] + diphosphate. In terms of biological role, transfers 2-(5''-triphosphoribosyl)-3'-dephosphocoenzyme-A on a serine residue to the apo-acyl carrier protein (gamma chain) of the citrate lyase to yield holo-acyl carrier protein. In Citrobacter koseri (strain ATCC BAA-895 / CDC 4225-83 / SGSC4696), this protein is Apo-citrate lyase phosphoribosyl-dephospho-CoA transferase.